We begin with the raw amino-acid sequence, 64 residues long: MGMRMMFTMFLLVVLTTTVVSFNSDRESNHENRRTSNQITRGVWDECCKDPQCRQNHMQHCPAR.

A signal peptide spans 1-21 (MGMRMMFTMFLLVVLTTTVVS). The propeptide occupies 22–41 (FNSDRESNHENRRTSNQITR). Cystine bridges form between Cys-47/Cys-53 and Cys-48/Cys-61. The segment at 49 to 51 (KDP) is lacks the Ser-Xaa-Pro motif that is crucial for potent interaction with nAChR.

It belongs to the conotoxin A superfamily. As to expression, expressed by the venom duct.

The protein resides in the secreted. In terms of biological role, alpha-conotoxins act on postsynaptic membranes, they bind to the nicotinic acetylcholine receptors (nAChR) and thus inhibit them. Has possibly a distinct nAChR binding mode from other alpha-conotoxins, due to a different three residue motif (Lys-Xaa-Pro instead of the conserved Ser-Xaa-Pro motif). This Conus leopardus (Leopard cone) protein is Alpha-conotoxin-like Lp1.8.